The chain runs to 227 residues: Cytidylate kinase (227 aa).

Position 12–20 (12–20 (GPSGAGKGT)) interacts with ATP.

It belongs to the cytidylate kinase family. Type 1 subfamily.

It localises to the cytoplasm. The enzyme catalyses CMP + ATP = CDP + ADP. It catalyses the reaction dCMP + ATP = dCDP + ADP. This Erwinia tasmaniensis (strain DSM 17950 / CFBP 7177 / CIP 109463 / NCPPB 4357 / Et1/99) protein is Cytidylate kinase.